Consider the following 457-residue polypeptide: Variant surface glycoprotein 20 (457 aa).

The signal sequence occupies residues 1–20; it reads MFTQAVIALIGLVSIRTGKT. A compositionally biased stretch (polar residues) spans 385–397; it reads RQTASGDDQSAEN. The interval 385–406 is disordered; that stretch reads RQTASGDDQSAENQCGGKKEDE. A glycan (N-linked (GlcNAc...) asparagine) is linked at Asn436. Ser440 carries the GPI-anchor amidated serine lipid modification. The propeptide at 441–457 is removed in mature form; that stretch reads NSFVIKKAPLWLAFLLF.

It is found in the cell membrane. In terms of biological role, VSG forms a coat on the surface of the parasite. The trypanosome evades the immune response of the host by expressing a series of antigenically distinct VSGs from an estimated 1000 VSG genes. The chain is Variant surface glycoprotein 20 from Trypanosoma equiperdum.